We begin with the raw amino-acid sequence, 251 residues long: 2,3-bisphosphoglycerate-dependent phosphoglycerate mutase (251 aa).

Substrate is bound by residues 11 to 18, 24 to 25, Arg-63, 90 to 93, Lys-101, 117 to 118, and 185 to 186; these read RHGNSDWN, TG, ERHY, RR, and GN. His-12 acts as the Tele-phosphohistidine intermediate in catalysis. Catalysis depends on Glu-90, which acts as the Proton donor/acceptor.

The protein belongs to the phosphoglycerate mutase family. BPG-dependent PGAM subfamily.

It carries out the reaction (2R)-2-phosphoglycerate = (2R)-3-phosphoglycerate. It functions in the pathway carbohydrate degradation; glycolysis; pyruvate from D-glyceraldehyde 3-phosphate: step 3/5. In terms of biological role, catalyzes the interconversion of 2-phosphoglycerate and 3-phosphoglycerate. The sequence is that of 2,3-bisphosphoglycerate-dependent phosphoglycerate mutase from Clavibacter sepedonicus (Clavibacter michiganensis subsp. sepedonicus).